We begin with the raw amino-acid sequence, 334 residues long: Dihydroorotate dehydrogenase (quinone) (334 aa).

Residues Ala59–Lys63 and Thr83 contribute to the FMN site. Lys63 contacts substrate. Asn108–Phe112 lines the substrate pocket. FMN contacts are provided by Asn136 and Asn169. Asn169 is a substrate binding site. The active-site Nucleophile is Ser172. Asn174 serves as a coordination point for substrate. Lys214 and Thr242 together coordinate FMN. Asn243–Thr244 is a substrate binding site. FMN-binding positions include Gly265, Gly294, and Tyr315–Ser316.

It belongs to the dihydroorotate dehydrogenase family. Type 2 subfamily. In terms of assembly, monomer. Requires FMN as cofactor.

It is found in the cell membrane. It carries out the reaction (S)-dihydroorotate + a quinone = orotate + a quinol. It participates in pyrimidine metabolism; UMP biosynthesis via de novo pathway; orotate from (S)-dihydroorotate (quinone route): step 1/1. In terms of biological role, catalyzes the conversion of dihydroorotate to orotate with quinone as electron acceptor. This Acinetobacter baumannii (strain AB0057) protein is Dihydroorotate dehydrogenase (quinone).